Reading from the N-terminus, the 91-residue chain is Small ribosomal subunit protein bS18 (91 aa).

Belongs to the bacterial ribosomal protein bS18 family. Part of the 30S ribosomal subunit. Forms a tight heterodimer with protein bS6.

Binds as a heterodimer with protein bS6 to the central domain of the 16S rRNA, where it helps stabilize the platform of the 30S subunit. The sequence is that of Small ribosomal subunit protein bS18 from Thiobacillus denitrificans (strain ATCC 25259 / T1).